Consider the following 80-residue polypeptide: Putative membrane protein insertion efficiency factor (80 aa).

Belongs to the UPF0161 family.

It localises to the cell membrane. Its function is as follows. Could be involved in insertion of integral membrane proteins into the membrane. The sequence is that of Putative membrane protein insertion efficiency factor from Shouchella clausii (strain KSM-K16) (Alkalihalobacillus clausii).